Here is a 104-residue protein sequence, read N- to C-terminus: MRFFSYLGLLLAGLTSLQGFSTDNLLEEELRYWCQYVKNCRFCWTCQDGLCKNKVLKDMSSVQEHSYPMKHCMIHRQCKYIRDGPIFQVECTIQTSDATHLINA.

A signal peptide spans 1–31 (MRFFSYLGLLLAGLTSLQGFSTDNLLEEELR).

The protein belongs to the asfivirus MGF 110 family.

In terms of biological role, plays a role in virus cell tropism, and may be required for efficient virus replication in macrophages. This is Protein MGF 110-2L from African swine fever virus (isolate Pig/Portugal/OURT88/1988) (ASFV).